Here is a 52-residue protein sequence, read N- to C-terminus: Photosystem II reaction center protein M (52 aa).

The helical transmembrane segment at phenylalanine 6 to phenylalanine 26 threads the bilayer. The disordered stretch occupies residues aspartate 31–lysine 52. The span at serine 42–lysine 52 shows a compositional bias: basic and acidic residues.

It belongs to the PsbM family. In terms of assembly, PSII is composed of 1 copy each of membrane proteins PsbA, PsbB, PsbC, PsbD, PsbE, PsbF, PsbH, PsbI, PsbJ, PsbK, PsbL, PsbM, PsbT, PsbX, PsbY, Psb30/Ycf12, peripheral proteins PsbO, CyanoQ (PsbQ), PsbU, PsbV and a large number of cofactors. It forms dimeric complexes.

Its subcellular location is the cellular thylakoid membrane. In terms of biological role, one of the components of the core complex of photosystem II (PSII). PSII is a light-driven water:plastoquinone oxidoreductase that uses light energy to abstract electrons from H(2)O, generating O(2) and a proton gradient subsequently used for ATP formation. It consists of a core antenna complex that captures photons, and an electron transfer chain that converts photonic excitation into a charge separation. This subunit is found at the monomer-monomer interface. This is Photosystem II reaction center protein M from Prochlorococcus marinus (strain NATL1A).